Here is a 256-residue protein sequence, read N- to C-terminus: MRLPAEALKDARKIVCFSGAGISAESGILTYLDQMPKLWAPYDPRALETANAFRESPALVWGWYLWRRRQVDRAQPNAAHLVWPQMVNLGYEVSVVTQNVDDLHERAGSTDVIHLHGSLTMPKCFACHRPAELTSDQMEIPDEGALVEPPRCKRCRGKLRPGVVWYGEDLPPGTWKNAVSLVKNCDALISVGTSGVVTPAADLPHIALASGATVIHVNTVDVGAQAANELMLVGRATDVLAKIHESLSTGKNNDNG.

Residues methionine 1 to glycine 250 form the Deacetylase sirtuin-type domain. Glycine 19–tryptophan 39 contacts NAD(+). Substrate is bound by residues tyrosine 64 and arginine 67. Glutamine 98–aspartate 101 is a binding site for NAD(+). The Proton acceptor role is filled by histidine 116. The Zn(2+) site is built by cysteine 124, cysteine 127, cysteine 152, and cysteine 155. NAD(+) is bound by residues glycine 192–serine 194, asparagine 218–valine 220, and alanine 236.

Belongs to the sirtuin family. Class III subfamily. Zn(2+) is required as a cofactor.

The protein resides in the cytoplasm. It catalyses the reaction N(6)-acetyl-L-lysyl-[protein] + NAD(+) + H2O = 2''-O-acetyl-ADP-D-ribose + nicotinamide + L-lysyl-[protein]. The catalysed reaction is N(6)-succinyl-L-lysyl-[protein] + NAD(+) + H2O = 2''-O-succinyl-ADP-D-ribose + nicotinamide + L-lysyl-[protein]. Its function is as follows. NAD-dependent lysine deacetylase and desuccinylase that specifically removes acetyl and succinyl groups on target proteins. Modulates the activities of several proteins which are inactive in their acylated form. This is NAD-dependent protein deacylase 4 from Pseudomonas syringae pv. tomato (strain ATCC BAA-871 / DC3000).